Consider the following 289-residue polypeptide: Myoblast determination protein 1 homolog A (289 aa).

Positions 95–146 (DRRKAATMRERRRLSKVNEAFETLKRYTSTNPNQRLPKVEILRNAIRYIESL) constitute a bHLH domain. A disordered region spans residues 165–212 (SGDSDASSPRSNCSDGMMDYNSPPCGSRRRNSYDSSFYSDSPNDSRLG). Composition is skewed to polar residues over residues 168–178 (SDASSPRSNCS) and 197–208 (YDSSFYSDSPND).

As to quaternary structure, efficient DNA binding requires dimerization with another bHLH protein.

Its subcellular location is the nucleus. Its function is as follows. May act as a transcriptional activator that promotes transcription of muscle-specific target genes and plays a role in muscle differentiation. This Xenopus laevis (African clawed frog) protein is Myoblast determination protein 1 homolog A (myod1-a).